A 584-amino-acid polypeptide reads, in one-letter code: Pectinesterase 3 (584 aa).

A signal peptide spans 1 to 50 (MTRIKEFFTKLSESSTNQNISNIPKKKKKLFLALFATLLVVAAVIGIVAG). Residues 51 to 266 (VNSRKNSGDN…LSTGDRRLLQ (216 aa)) constitute a propeptide that is removed on maturation. Residues asparagine 108, asparagine 129, and asparagine 226 are each glycosylated (N-linked (GlcNAc...) asparagine). Substrate is bound by residues threonine 348 and glutamine 378. Aspartate 401 (proton donor) is an active-site residue. The cysteines at positions 415 and 435 are disulfide-linked. The active-site Nucleophile is aspartate 422. Residues arginine 490 and tryptophan 492 each coordinate substrate.

In the N-terminal section; belongs to the PMEI family. It in the C-terminal section; belongs to the pectinesterase family. As to expression, in the peel, expression is localized to the region of the flavedo close to the oil glands, and to the innermost layer of the albedo. In the lamella, expression is localized to the cell layers opposing the fruit tissue, and to the parenchyma surrounding the vascular tissue. In the fruit vesicles, expression is restricted to the peripheral cell layers and stalk cells. High levels of expression are detected in the core matrix.

The protein resides in the secreted. Its subcellular location is the cell wall. The enzyme catalyses [(1-&gt;4)-alpha-D-galacturonosyl methyl ester](n) + n H2O = [(1-&gt;4)-alpha-D-galacturonosyl](n) + n methanol + n H(+). Its pathway is glycan metabolism; pectin degradation; 2-dehydro-3-deoxy-D-gluconate from pectin: step 1/5. Acts in the modification of cell walls via demethylesterification of cell wall pectin. The polypeptide is Pectinesterase 3 (Citrus sinensis (Sweet orange)).